A 231-amino-acid polypeptide reads, in one-letter code: MVKLVFARHGESEWNKANLFTGWADVDLSEKGTQQAIDAGKLIKEAGIAFDLAFTSVLKRAIKTTNLALEYSDQLWVPVEKSWRLNERHYGGLTGKNKAEAAEQFGDEQVHIWRRSYDVLPPDMAKDDEHSAHTDRRYAHLDHSVIPDAENLKVTLERALPFWEDKIAPALVDGKNVFVGAHGNSIRALVKHIKQLSDDEIMNVEIPNFPPLVFEFDDKLNLTAEYYLGGE.

Substrate contacts are provided by residues 8–15, 21–22, Arg-60, 87–90, Lys-98, 114–115, and 183–184; these read RHGESEWN, TG, ERHY, RR, and GN. The Tele-phosphohistidine intermediate role is filled by His-9. The Proton donor/acceptor role is filled by Glu-87.

This sequence belongs to the phosphoglycerate mutase family. BPG-dependent PGAM subfamily.

It carries out the reaction (2R)-2-phosphoglycerate = (2R)-3-phosphoglycerate. The protein operates within carbohydrate degradation; glycolysis; pyruvate from D-glyceraldehyde 3-phosphate: step 3/5. Its function is as follows. Catalyzes the interconversion of 2-phosphoglycerate and 3-phosphoglycerate. This is 2,3-bisphosphoglycerate-dependent phosphoglycerate mutase from Streptococcus equi subsp. zooepidemicus (strain H70).